A 418-amino-acid polypeptide reads, in one-letter code: Glutamyl-tRNA reductase (418 aa).

Substrate contacts are provided by residues 49–52 (TCNR), Ser-109, 114–116 (EPQ), and Gln-120. Catalysis depends on Cys-50, which acts as the Nucleophile. Position 189–194 (189–194 (GAGETI)) interacts with NADP(+).

This sequence belongs to the glutamyl-tRNA reductase family. As to quaternary structure, homodimer.

The enzyme catalyses (S)-4-amino-5-oxopentanoate + tRNA(Glu) + NADP(+) = L-glutamyl-tRNA(Glu) + NADPH + H(+). It participates in porphyrin-containing compound metabolism; protoporphyrin-IX biosynthesis; 5-aminolevulinate from L-glutamyl-tRNA(Glu): step 1/2. Functionally, catalyzes the NADPH-dependent reduction of glutamyl-tRNA(Glu) to glutamate 1-semialdehyde (GSA). This is Glutamyl-tRNA reductase from Escherichia fergusonii (strain ATCC 35469 / DSM 13698 / CCUG 18766 / IAM 14443 / JCM 21226 / LMG 7866 / NBRC 102419 / NCTC 12128 / CDC 0568-73).